We begin with the raw amino-acid sequence, 275 residues long: Dermonecrotic toxin LamSicTox-alphaIV1iii (275 aa).

The active site involves His-5. Residues Glu-25 and Asp-27 each coordinate Mg(2+). His-41 (nucleophile) is an active-site residue. 2 disulfide bridges follow: Cys-45–Cys-51 and Cys-47–Cys-192. Position 85 (Asp-85) interacts with Mg(2+).

This sequence belongs to the arthropod phospholipase D family. Class II subfamily. Mg(2+) serves as cofactor. Expressed by the venom gland.

It localises to the secreted. It catalyses the reaction an N-(acyl)-sphingosylphosphocholine = an N-(acyl)-sphingosyl-1,3-cyclic phosphate + choline. It carries out the reaction an N-(acyl)-sphingosylphosphoethanolamine = an N-(acyl)-sphingosyl-1,3-cyclic phosphate + ethanolamine. The catalysed reaction is a 1-acyl-sn-glycero-3-phosphocholine = a 1-acyl-sn-glycero-2,3-cyclic phosphate + choline. The enzyme catalyses a 1-acyl-sn-glycero-3-phosphoethanolamine = a 1-acyl-sn-glycero-2,3-cyclic phosphate + ethanolamine. In terms of biological role, dermonecrotic toxins cleave the phosphodiester linkage between the phosphate and headgroup of certain phospholipids (sphingolipid and lysolipid substrates), forming an alcohol (often choline) and a cyclic phosphate. This toxin acts on sphingomyelin (SM). It may also act on ceramide phosphoethanolamine (CPE), lysophosphatidylcholine (LPC) and lysophosphatidylethanolamine (LPE), but not on lysophosphatidylserine (LPS), and lysophosphatidylglycerol (LPG). It acts by transphosphatidylation, releasing exclusively cyclic phosphate products as second products. Induces dermonecrosis, hemolysis, increased vascular permeability, edema, inflammatory response, and platelet aggregation. The chain is Dermonecrotic toxin LamSicTox-alphaIV1iii from Loxosceles amazonica (Recluse spider).